Consider the following 118-residue polypeptide: Phospholipase A2 'basic' (118 aa).

7 disulfide bridges follow: C11-C70, C26-C117, C28-C44, C43-C98, C50-C91, C59-C84, and C77-C89. Positions 27, 29, and 31 each coordinate Ca(2+). H47 is an active-site residue. Residue D48 participates in Ca(2+) binding. A Coagulation factor Xa binding motif motif is present at residues 52–69 (EKAGKMGCWPYLTLYKYK). Residue D92 is part of the active site.

Belongs to the phospholipase A2 family. Group I subfamily. D49 sub-subfamily. It depends on Ca(2+) as a cofactor. Expressed by the venom gland.

It localises to the secreted. The catalysed reaction is a 1,2-diacyl-sn-glycero-3-phosphocholine + H2O = a 1-acyl-sn-glycero-3-phosphocholine + a fatty acid + H(+). In terms of biological role, snake venom phospholipase A2 (PLA2) that shows strong anticoagulant activity. Binds directly with the coagulation factor FXa (F10) and blocks the formation of the prothombinase complex. Acts by a nonenzymatic mechanism. Also inhibits the complex composed of tissue factor (F3) and coagulation factor VIIa (F7) (TF-VIIa complex) by both enzymatic and nonenzymatic mechanisms. PLA2 catalyzes the calcium-dependent hydrolysis of the 2-acyl groups in 3-sn-phosphoglycerides. The protein is Phospholipase A2 'basic' of Naja nigricollis (Black-necked spitting cobra).